Here is a 289-residue protein sequence, read N- to C-terminus: ATP synthase gamma chain (289 aa).

The protein belongs to the ATPase gamma chain family. In terms of assembly, F-type ATPases have 2 components, CF(1) - the catalytic core - and CF(0) - the membrane proton channel. CF(1) has five subunits: alpha(3), beta(3), gamma(1), delta(1), epsilon(1). CF(0) has three main subunits: a, b and c.

It localises to the cell inner membrane. In terms of biological role, produces ATP from ADP in the presence of a proton gradient across the membrane. The gamma chain is believed to be important in regulating ATPase activity and the flow of protons through the CF(0) complex. This chain is ATP synthase gamma chain, found in Dichelobacter nodosus (strain VCS1703A).